We begin with the raw amino-acid sequence, 226 residues long: MKRMRLKAVLFDMDGTLLDTAPDFIAITQAMRAAHGLPPVDEQRVRDVVSGGARAMVAAAFGLSLDSPEVEPLRQEFLDRYQEHCAVLSRPYDGIPELLAAIEKAGLIWGVVTNKPVRFAEPIMQRLGYAERSRVLVCPDHVTRSKPDPEPLLLACSQLGIDPSRVLFIGDDLRDIESGRDAGTKTAAVRYGYIHPEDNPAHWGADVIVDHPRELIDVLDRALCDC.

Aspartate 12 functions as the Nucleophile in the catalytic mechanism. Residues aspartate 12, aspartate 14, and aspartate 171 each coordinate Mg(2+). Catalysis depends on aspartate 14, which acts as the Proton donor.

It belongs to the HAD-like hydrolase superfamily. CbbY/CbbZ/Gph/YieH family. Phosphatase MupP subfamily. Mg(2+) is required as a cofactor.

The catalysed reaction is N-acetyl-D-muramate 6-phosphate + H2O = N-acetyl-D-muramate + phosphate. It functions in the pathway cell wall biogenesis; peptidoglycan recycling. Specifically catalyzes the dephosphorylation of N-acetylmuramate 6-phosphate (MurNAc-6P) to MurNac. Is involved in peptidoglycan recycling as part of a cell wall recycling pathway that bypasses de novo biosynthesis of the peptidoglycan precursor UDP-MurNAc. Plays a role in intrinsic resistance to fosfomycin, which targets the de novo synthesis of UDP-MurNAc. This Pseudomonas aeruginosa (strain ATCC 15692 / DSM 22644 / CIP 104116 / JCM 14847 / LMG 12228 / 1C / PRS 101 / PAO1) protein is N-acetylmuramic acid 6-phosphate phosphatase.